Reading from the N-terminus, the 296-residue chain is Bifunctional protein FolD (296 aa).

Residues glycine 166 to serine 168, serine 195, and threonine 236 contribute to the NADP(+) site.

The protein belongs to the tetrahydrofolate dehydrogenase/cyclohydrolase family. Homodimer.

It catalyses the reaction (6R)-5,10-methylene-5,6,7,8-tetrahydrofolate + NADP(+) = (6R)-5,10-methenyltetrahydrofolate + NADPH. The catalysed reaction is (6R)-5,10-methenyltetrahydrofolate + H2O = (6R)-10-formyltetrahydrofolate + H(+). Its pathway is one-carbon metabolism; tetrahydrofolate interconversion. Functionally, catalyzes the oxidation of 5,10-methylenetetrahydrofolate to 5,10-methenyltetrahydrofolate and then the hydrolysis of 5,10-methenyltetrahydrofolate to 10-formyltetrahydrofolate. This is Bifunctional protein FolD from Dehalococcoides mccartyi (strain ATCC BAA-2266 / KCTC 15142 / 195) (Dehalococcoides ethenogenes (strain 195)).